The chain runs to 30 residues: Bowman-Birk type proteinase inhibitor 3 (30 aa).

Intrachain disulfides connect Cys-9/Cys-24 and Cys-14/Cys-22.

Inhibits trypsin (IC(50)=4.90 nM) and, to a lesser extent, alpha-chymotrypsin (IC(50)=1.87 uM). This is Bowman-Birk type proteinase inhibitor 3 from Lathyrus sativus (White vetchling).